The primary structure comprises 2297 residues: Xin actin-binding repeat-containing protein 1 (2297 aa).

The span at 1-11 (MAEVAKQKKAT) shows a compositional bias: basic and acidic residues. Residues 1–28 (MAEVAKQKKATEAVCGDEDFPPPPPPLP) are disordered. Xin repeat units lie at residues 104–119 (GEVQ…WTLD), 139–154 (GDVK…STFD), 169–184 (GDVR…QPLD), 208–223 (GDVT…KPLD), 248–263 (GDVK…DPCC), 286–301 (SDFK…QPLD), 323–338 (GGVD…QPLD), 362–377 (ADVH…QPLS), and 396–411 (GNVG…QPMD). Over residues 433–442 (GEVQDKRMQF) the composition is skewed to basic and acidic residues. The interval 433–461 (GEVQDKRMQFEKSTAGKTAGDSGNKVQND) is disordered. 14 Xin repeats span residues 464 to 479 (GDVK…LPLN), 494 to 509 (GDVK…TPLY), 532 to 547 (GNVQ…RPLD), 570 to 585 (DDTR…QPLD), 605 to 620 (SNVK…KPMD), 638 to 653 (ADVK…QPLD), 677 to 692 (VNVK…EPLD), 715 to 730 (GDVS…KSLG), 747 to 762 (GSVH…QPIG), 779 to 794 (GDVG…LSLD), 818 to 833 (VNVK…QPLY), 856 to 871 (GDVR…KPLD), 893 to 908 (GDVK…QPLD), and 928 to 943 (KCVQ…EQAS). Residue serine 952 is modified to Phosphoserine. 3 Xin repeats span residues 959–974 (GDVR…QPID), 997–1012 (GDVK…QSLD), and 1033–1048 (ADVK…TPLD). Disordered regions lie at residues 1617–1680 (PSSH…KDQK), 1866–1900 (KENI…VPSI), 2147–2191 (SAAR…PRRK), and 2243–2297 (ELSS…TEKH). 2 stretches are compositionally biased toward low complexity: residues 1618-1630 (SSHT…VSVT) and 1644-1656 (SVSS…KNSS). Composition is skewed to basic and acidic residues over residues 1876-1885 (SNKDELHFTS) and 2151-2162 (KPAESPTDKPKT). Residues 2166–2180 (QSNAGSSSSQNSSAS) show a composition bias toward low complexity. Residues 2259–2278 (GMTSPVLQRSGQSFSSNSLS) are compositionally biased toward polar residues.

The protein belongs to the Xin family. In terms of tissue distribution, expressed at intercalated disks in the heart (at protein level).

Its subcellular location is the cell junction. It is found in the adherens junction. The protein resides in the desmosome. Its function is as follows. Positively regulates organization of the outer plexiform layer and Muller glia cells in the retina. May protect actin filaments from depolymerization. May play a role in development of normal skeletal muscle morphology and muscle fiber type composition. The protein is Xin actin-binding repeat-containing protein 1 of Danio rerio (Zebrafish).